Reading from the N-terminus, the 77-residue chain is Translation initiation factor IF-1, chloroplastic (77 aa).

Residues 1–71 (MKEQKWIHEG…TRGRIIYRLR (71 aa)) form the S1-like domain.

Belongs to the IF-1 family. As to quaternary structure, component of the 30S ribosomal translation pre-initiation complex which assembles on the 30S ribosome in the order IF-2 and IF-3, IF-1 and N-formylmethionyl-tRNA(fMet); mRNA recruitment can occur at any time during PIC assembly.

It localises to the plastid. It is found in the chloroplast. In terms of biological role, one of the essential components for the initiation of protein synthesis. Stabilizes the binding of IF-2 and IF-3 on the 30S subunit to which N-formylmethionyl-tRNA(fMet) subsequently binds. Helps modulate mRNA selection, yielding the 30S pre-initiation complex (PIC). Upon addition of the 50S ribosomal subunit IF-1, IF-2 and IF-3 are released leaving the mature 70S translation initiation complex. The protein is Translation initiation factor IF-1, chloroplastic of Nandina domestica (Heavenly bamboo).